The chain runs to 249 residues: Tetraspanin-18 (249 aa).

Residues 1-13 are Cytoplasmic-facing; sequence MEGDCLSCMKYLM. The helical transmembrane segment at 14-34 threads the bilayer; the sequence is FVFNFFIFLGGACLLGIGIWV. Topologically, residues 35–49 are extracellular; the sequence is MVDPTGFREIVAANP. A helical transmembrane segment spans residues 50 to 70; the sequence is LLITGAYILLAMGGLLFLLGF. Topologically, residues 71 to 83 are cytoplasmic; sequence LGCCGAVRENKCL. A helical membrane pass occupies residues 84-104; that stretch reads LLFFFLFILIIFLAELSAAIL. The Extracellular portion of the chain corresponds to 105–223; it reads AFIFRGNLTR…AFETYVYLAG (119 aa). Asparagine 111 and asparagine 129 each carry an N-linked (GlcNAc...) asparagine glycan. The helical transmembrane segment at 224–244 threads the bilayer; sequence ALAIGVLAIELFAMIFAMCLF. The Cytoplasmic portion of the chain corresponds to 245–249; the sequence is RGIIQ.

Belongs to the tetraspanin (TM4SF) family. As to quaternary structure, interacts with ORAI1; this interaction regulates ORAI1 exit from the endoplasmic (ER), and/or Golgi, and trafficking to the cell surface.

Its subcellular location is the membrane. Plays a role in the cell surface localization of ORAI1 and may participate in the regulation of Ca(2+) signaling and the VWF release in response to inflammatory stimuli. The polypeptide is Tetraspanin-18 (Bos taurus (Bovine)).